The chain runs to 511 residues: Xylose import ATP-binding protein XylG (511 aa).

2 consecutive ABC transporter domains span residues 6–244 and 261–506; these read LEMR…VGRE and FEAR…IGKP. 38 to 45 is a binding site for ATP; the sequence is GENGAGKS.

Belongs to the ABC transporter superfamily. Xylose importer (TC 3.A.1.2.4) family. As to quaternary structure, the complex is composed of two ATP-binding proteins (XylG), two transmembrane proteins (XylH) and a solute-binding protein (XylF).

The protein resides in the cell inner membrane. It catalyses the reaction D-xylose(out) + ATP + H2O = D-xylose(in) + ADP + phosphate + H(+). Its function is as follows. Part of the ABC transporter complex XylFGH involved in xylose import. Responsible for energy coupling to the transport system. The chain is Xylose import ATP-binding protein XylG from Brucella suis biovar 1 (strain 1330).